Here is a 110-residue protein sequence, read N- to C-terminus: Cell cycle protein GpsB (110 aa).

The stretch at 37-63 (KDYTVYIALVKELQEENAKLKAKATSA) forms a coiled coil. A disordered region spans residues 59-79 (KATSAPASRPAYASATSEPSH). Low complexity predominate over residues 60–75 (ATSAPASRPAYASATS).

Belongs to the GpsB family. Forms polymers through the coiled coil domains. Interacts with PBP1, MreC and EzrA.

The protein resides in the cytoplasm. Divisome component that associates with the complex late in its assembly, after the Z-ring is formed, and is dependent on DivIC and PBP2B for its recruitment to the divisome. Together with EzrA, is a key component of the system that regulates PBP1 localization during cell cycle progression. Its main role could be the removal of PBP1 from the cell pole after pole maturation is completed. Also contributes to the recruitment of PBP1 to the division complex. Not essential for septum formation. This chain is Cell cycle protein GpsB, found in Streptococcus thermophilus (strain CNRZ 1066).